A 212-amino-acid polypeptide reads, in one-letter code: Pyridoxine/pyridoxamine 5'-phosphate oxidase (212 aa).

Residues Arg-7–Tyr-10 and Lys-65 contribute to the substrate site. Residues Arg-60 to Lys-65, Phe-75 to Thr-76, Arg-81, Lys-82, and Gln-104 each bind FMN. Positions 122, 126, and 130 each coordinate substrate. FMN is bound by residues Gln-139–Ser-140 and Trp-184. Arg-190–His-192 is a binding site for substrate. Residue Arg-194 participates in FMN binding.

It belongs to the pyridoxamine 5'-phosphate oxidase family. Homodimer. Requires FMN as cofactor.

It catalyses the reaction pyridoxamine 5'-phosphate + O2 + H2O = pyridoxal 5'-phosphate + H2O2 + NH4(+). The catalysed reaction is pyridoxine 5'-phosphate + O2 = pyridoxal 5'-phosphate + H2O2. It participates in cofactor metabolism; pyridoxal 5'-phosphate salvage; pyridoxal 5'-phosphate from pyridoxamine 5'-phosphate: step 1/1. It functions in the pathway cofactor metabolism; pyridoxal 5'-phosphate salvage; pyridoxal 5'-phosphate from pyridoxine 5'-phosphate: step 1/1. Functionally, catalyzes the oxidation of either pyridoxine 5'-phosphate (PNP) or pyridoxamine 5'-phosphate (PMP) into pyridoxal 5'-phosphate (PLP). The protein is Pyridoxine/pyridoxamine 5'-phosphate oxidase of Pseudoalteromonas translucida (strain TAC 125).